Reading from the N-terminus, the 943-residue chain is AP-1 complex subunit beta-1 (943 aa).

An N6-acetyllysine modification is found at Lys-318. A 3'-nitrotyrosine modification is found at Tyr-574. The tract at residues 584–621 (GGRGVVHKSLPPRTASSESTESPETAPAGAPAGDQPDV) is disordered. A compositionally biased stretch (low complexity) spans 594 to 616 (PPRTASSESTESPETAPAGAPAG).

It belongs to the adaptor complexes large subunit family. Adaptor protein complex 1 (AP-1) is a heterotetramer composed of two large adaptins (gamma-type subunit AP1G1 and beta-type subunit AP1B1), a medium adaptin (mu-type subunit AP1M1 or AP1M2) and a small adaptin (sigma-type subunit AP1S1 or AP1S2 or AP1S3). In terms of tissue distribution, widely expressed.

It is found in the cytoplasmic vesicle. The protein resides in the clathrin-coated vesicle membrane. It localises to the golgi apparatus. Subunit of clathrin-associated adaptor protein complex 1 that plays a role in protein sorting in the late-Golgi/trans-Golgi network (TGN) and/or endosomes. The AP complexes mediate both the recruitment of clathrin to membranes and the recognition of sorting signals within the cytosolic tails of transmembrane cargo molecules. This Mus musculus (Mouse) protein is AP-1 complex subunit beta-1 (Ap1b1).